The sequence spans 282 residues: Ermin (282 aa).

Polar residues-rich tracts occupy residues 1-12 (MTDTPVTLSGSE) and 21-30 (NGQQPSSQTR). The tract at residues 1-71 (MTDTPVTLSG…NSKGNVLPRG (71 aa)) is disordered. 5 positions are modified to phosphoserine: serine 72, serine 212, serine 224, serine 228, and serine 231. Residues 212–224 (SPLKEESLAREDS) show a composition bias toward basic and acidic residues. Residues 212–246 (SPLKEESLAREDSPLSSPSSQPGTPDEQLVLGKKG) form a disordered region. Residues 225–234 (PLSSPSSQPG) show a composition bias toward polar residues. Threonine 235 bears the Phosphothreonine mark. The interval 263–282 (KIRKGNTKQRIDEFESMMHL) is binds actin.

As to quaternary structure, binds actin. In terms of tissue distribution, expressed specifically by the oligodendrocytes. Highest expression seen in the spinal cord followed by brainstem, cerebellum, thalamus, and hypothalamus. In the myelin sheath, found mainly in the abaxon and the lateral few terminal loops. Its apposition to the myelinated axon, through the latter, defines an axonal subregion, termed juxtanode, at the Ranvier node-paranode junction.

It is found in the cytoplasm. Its subcellular location is the cytoskeleton. Its function is as follows. Plays a role in cytoskeletal rearrangements during the late wrapping and/or compaction phases of myelinogenesis as well as in maintenance and stability of myelin sheath in the adult. May play an important role in late-stage oligodendroglia maturation, myelin/Ranvier node formation during CNS development, and in the maintenance and plasticity of related structures in the mature CNS. In Rattus norvegicus (Rat), this protein is Ermin (Ermn).